We begin with the raw amino-acid sequence, 62 residues long: Potassium channel toxin kappa-KTx 3.2 (62 aa).

Positions 1 to 26 are cleaved as a signal peptide; it reads MKSTLMTASLLILVLLSIVDYASVYA. A propeptide spanning residues 27-36 is cleaved from the precursor; it reads ELIDSEISME. 2 cysteine pairs are disulfide-bonded: Cys43–Cys61 and Cys47–Cys57.

Belongs to the short scorpion toxin superfamily. Potassium channel inhibitor kappa-KTx family. Kappa-KTx 3 subfamily. In terms of tissue distribution, expressed by the venom gland.

The protein resides in the secreted. Potassium channel inhibitor (Kv). The sequence is that of Potassium channel toxin kappa-KTx 3.2 from Heterometrus petersii (Asian forest scorpion).